The following is a 95-amino-acid chain: Integration host factor subunit beta (95 aa).

This sequence belongs to the bacterial histone-like protein family. In terms of assembly, heterodimer of an alpha and a beta chain.

This protein is one of the two subunits of integration host factor, a specific DNA-binding protein that functions in genetic recombination as well as in transcriptional and translational control. This is Integration host factor subunit beta from Shewanella amazonensis (strain ATCC BAA-1098 / SB2B).